The following is a 449-amino-acid chain: Aspartyl protease AED3 (449 aa).

The signal sequence occupies residues 1–23; the sequence is MASSSLHFFFFLTLLLPFTFTTA. A Peptidase A1 domain is found at 104 to 444; it reads YVVRAKLGTP…DVPNSRIGIA (341 aa). The active site involves D122. A disulfide bridge connects residues C132 and C138. N140, N148, N184, N211, and N297 each carry an N-linked (GlcNAc...) asparagine glycan. Residue D328 is part of the active site. N-linked (GlcNAc...) asparagine glycosylation occurs at N353. A disulfide bridge links C366 with C405.

This sequence belongs to the peptidase A1 family.

The protein localises to the secreted. The protein resides in the extracellular space. It localises to the apoplast. The polypeptide is Aspartyl protease AED3 (Arabidopsis thaliana (Mouse-ear cress)).